The following is a 408-amino-acid chain: Phosphoglycerate kinase (408 aa).

Substrate contacts are provided by residues 24–26, Arg-40, 63–66, Arg-122, and Arg-166; these read DLN and HLGR. ATP-binding positions include Lys-216, Gly-304, Glu-335, and 364–367; that span reads GGDS.

It belongs to the phosphoglycerate kinase family. As to quaternary structure, monomer.

It localises to the cytoplasm. It carries out the reaction (2R)-3-phosphoglycerate + ATP = (2R)-3-phospho-glyceroyl phosphate + ADP. The protein operates within carbohydrate degradation; glycolysis; pyruvate from D-glyceraldehyde 3-phosphate: step 2/5. This is Phosphoglycerate kinase from Mycolicibacterium smegmatis (strain ATCC 700084 / mc(2)155) (Mycobacterium smegmatis).